The primary structure comprises 556 residues: Membrane protein insertase YidC (556 aa).

5 helical membrane passes run 6-26, 332-352, 358-378, 428-448, and 501-521; these read IVLY…WQID, LDLT…FSLM, VVGN…LAFY, LGGC…YWVL, and VMMF…SGLV.

The protein belongs to the OXA1/ALB3/YidC family. Type 1 subfamily. As to quaternary structure, interacts with the Sec translocase complex via SecD. Specifically interacts with transmembrane segments of nascent integral membrane proteins during membrane integration.

The protein localises to the cell inner membrane. Required for the insertion and/or proper folding and/or complex formation of integral membrane proteins into the membrane. Involved in integration of membrane proteins that insert both dependently and independently of the Sec translocase complex, as well as at least some lipoproteins. Aids folding of multispanning membrane proteins. This Legionella pneumophila (strain Paris) protein is Membrane protein insertase YidC.